Consider the following 665-residue polypeptide: Zinc finger CCCH domain-containing protein 45 (665 aa).

A disordered region spans residues 1–55; the sequence is MDDGDLSFDFEGGLDQPPAGGGGGPAPHSSDPGGVGGGGGGGGPGDGGGHGRGRG. A compositionally biased stretch (gly residues) spans 33–50; the sequence is GGVGGGGGGGGPGDGGGH. 3 C3H1-type zinc fingers span residues 58–85, 86–113, and 114–139; these read SYRQ…HQFD, KARM…HSYD, and DVKE…HVKL. The tract at residues 167-256 is disordered; the sequence is HNNYNQQGER…QATRIATPLP (90 aa). Residues 169 to 200 show a composition bias toward polar residues; the sequence is NYNQQGERPQHPQGSGLPNQNSIDNTTTTTAQ. Low complexity predominate over residues 205 to 238; it reads QQAQTTNQQPPQQQQQQQQQQQQQQKPNTNDQVQ. Positions 239-250 are enriched in polar residues; sequence SVPNGSSNQATR. The region spanning 260–395 is the YTH domain; the sequence is SRYFIVKSCN…FIGEQLASLL (136 aa). Residues 432–459 adopt a coiled-coil conformation; that stretch reads DIVLFDDNEEEEEEESEEEEEGNGQESQ. Residues 439-454 show a composition bias toward acidic residues; that stretch reads NEEEEEEESEEEEEGN. Disordered regions lie at residues 439–469 and 561–665; these read NEEE…GMMW and GPLM…SRKR. The span at 561–573 shows a compositional bias: gly residues; it reads GPLMGGLGMGGPG. Basic and acidic residues predominate over residues 596–623; sequence TKREQRRPGGERGDRYETTSDQGSRGHD.

The polypeptide is Zinc finger CCCH domain-containing protein 45 (Oryza sativa subsp. japonica (Rice)).